The following is a 300-amino-acid chain: N-acetylmuramic acid 6-phosphate etherase (300 aa).

Positions 55–217 constitute an SIS domain; that stretch reads IAERLRAGGR…STGAMIRLGK (163 aa). E83 serves as the catalytic Proton donor. E114 is a catalytic residue.

The protein belongs to the GCKR-like family. MurNAc-6-P etherase subfamily. As to quaternary structure, homodimer.

It carries out the reaction N-acetyl-D-muramate 6-phosphate + H2O = N-acetyl-D-glucosamine 6-phosphate + (R)-lactate. Its pathway is amino-sugar metabolism; N-acetylmuramate degradation. Functionally, specifically catalyzes the cleavage of the D-lactyl ether substituent of MurNAc 6-phosphate, producing GlcNAc 6-phosphate and D-lactate. In Symbiobacterium thermophilum (strain DSM 24528 / JCM 14929 / IAM 14863 / T), this protein is N-acetylmuramic acid 6-phosphate etherase.